A 672-amino-acid chain; its full sequence is Probable copper-transporting P-type ATPase B (672 aa).

The span at 1 to 17 (MEHHSHQEHENHTSHGN) shows a compositional bias: basic and acidic residues. The tract at residues 1–22 (MEHHSHQEHENHTSHGNHEHHH) is disordered. Helical transmembrane passes span 30–50 (FFIS…MGVK), 55–75 (ISFT…FFYG), 93–113 (GMMT…LYAF), 125–145 (TMDF…GHWI), 282–302 (GYLF…WMLI), and 313–333 (LVTV…PLVT). Asp365 acts as the 4-aspartylphosphate intermediate in catalysis. The Mg(2+) site is built by Asp563 and Asp567. 2 consecutive transmembrane segments (helical) span residues 621–643 (LWWG…ASIG) and 647–669 (SPAV…AFTL).

This sequence belongs to the cation transport ATPase (P-type) (TC 3.A.3) family. Type IB subfamily.

The protein localises to the cell membrane. The catalysed reaction is Cu(+)(in) + ATP + H2O = Cu(+)(out) + ADP + phosphate + H(+). Involved in copper transport. This Staphylococcus aureus protein is Probable copper-transporting P-type ATPase B (copB).